The sequence spans 514 residues: ATP synthase subunit alpha (514 aa).

170–177 (GDRQTGKT) contacts ATP.

This sequence belongs to the ATPase alpha/beta chains family. In terms of assembly, F-type ATPases have 2 components, CF(1) - the catalytic core - and CF(0) - the membrane proton channel. CF(1) has five subunits: alpha(3), beta(3), gamma(1), delta(1), epsilon(1). CF(0) has three main subunits: a(1), b(2) and c(9-12). The alpha and beta chains form an alternating ring which encloses part of the gamma chain. CF(1) is attached to CF(0) by a central stalk formed by the gamma and epsilon chains, while a peripheral stalk is formed by the delta and b chains.

It localises to the cell inner membrane. The enzyme catalyses ATP + H2O + 4 H(+)(in) = ADP + phosphate + 5 H(+)(out). Its function is as follows. Produces ATP from ADP in the presence of a proton gradient across the membrane. The alpha chain is a regulatory subunit. This is ATP synthase subunit alpha from Acidithiobacillus ferrooxidans (strain ATCC 23270 / DSM 14882 / CIP 104768 / NCIMB 8455) (Ferrobacillus ferrooxidans (strain ATCC 23270)).